We begin with the raw amino-acid sequence, 143 residues long: Pre-mRNA-splicing factor U5-Cwc21 (143 aa).

The 44-residue stretch at 27–70 folds into the CWF21 domain; that stretch reads EHHRSLRAIKLKVLLYREEREAAGVPPDVISRECATLHGSLLRN.

The protein belongs to the CWC21 family. As to quaternary structure, associates with the NTC complex (or PRP19-associated complex). The NTC complex associates with the spliceosome after the release of the U1 and U4 snRNAs and forms the CWC spliceosome subcomplex reminiscent of a late-stage spliceosome. Associates specifically with U5-containing snRNPs.

It is found in the cytoplasm. The protein resides in the nucleus. In terms of biological role, essential protein involved in pre-mRNA cis- and trans-splicing. May function at or prior to the first catalytic step of splicing at the catalytic center of the spliceosome. May do so by stabilizing the catalytic center or the position of the RNA substrate. The protein is Pre-mRNA-splicing factor U5-Cwc21 of Trypanosoma brucei brucei (strain 927/4 GUTat10.1).